Reading from the N-terminus, the 333-residue chain is Ketol-acid reductoisomerase (NADP(+)) (333 aa).

The KARI N-terminal Rossmann domain maps to 1-179 (MFYDDDADLT…GGTRAGVIKT (179 aa)). NADP(+) contacts are provided by residues 22–25 (YGSQ), Lys45, Ser48, Ser50, and 80–83 (DTAQ). The active site involves His105. Gly131 serves as a coordination point for NADP(+). Residues 180 to 325 (TFKDETETDL…KRLRDLMSWV (146 aa)) enclose the KARI C-terminal knotted domain. Positions 188, 192, 224, and 228 each coordinate Mg(2+). Substrate is bound at residue Ser249.

This sequence belongs to the ketol-acid reductoisomerase family. Mg(2+) is required as a cofactor.

It carries out the reaction (2R)-2,3-dihydroxy-3-methylbutanoate + NADP(+) = (2S)-2-acetolactate + NADPH + H(+). It catalyses the reaction (2R,3R)-2,3-dihydroxy-3-methylpentanoate + NADP(+) = (S)-2-ethyl-2-hydroxy-3-oxobutanoate + NADPH + H(+). It functions in the pathway amino-acid biosynthesis; L-isoleucine biosynthesis; L-isoleucine from 2-oxobutanoate: step 2/4. Its pathway is amino-acid biosynthesis; L-valine biosynthesis; L-valine from pyruvate: step 2/4. In terms of biological role, involved in the biosynthesis of branched-chain amino acids (BCAA). Catalyzes an alkyl-migration followed by a ketol-acid reduction of (S)-2-acetolactate (S2AL) to yield (R)-2,3-dihydroxy-isovalerate. In the isomerase reaction, S2AL is rearranged via a Mg-dependent methyl migration to produce 3-hydroxy-3-methyl-2-ketobutyrate (HMKB). In the reductase reaction, this 2-ketoacid undergoes a metal-dependent reduction by NADPH to yield (R)-2,3-dihydroxy-isovalerate. The polypeptide is Ketol-acid reductoisomerase (NADP(+)) (Mycobacterium avium).